The following is a 106-amino-acid chain: Large ribosomal subunit protein uL24 (106 aa).

The segment covering 84–97 (EKIGRELGAKEKAR) has biased composition (basic and acidic residues). The segment at 84–106 (EKIGRELGAKEKARLQKRKTAAK) is disordered.

It belongs to the universal ribosomal protein uL24 family. Part of the 50S ribosomal subunit.

Its function is as follows. One of two assembly initiator proteins, it binds directly to the 5'-end of the 23S rRNA, where it nucleates assembly of the 50S subunit. One of the proteins that surrounds the polypeptide exit tunnel on the outside of the subunit. The protein is Large ribosomal subunit protein uL24 of Anaeromyxobacter dehalogenans (strain 2CP-1 / ATCC BAA-258).